The primary structure comprises 73 residues: MTRILLLLLTFYRYFISPLLGGNNCRFYPTCSKYAKEALNTHGGIKGLWLIFKRIIKCQPLCDGGYDPVPLTK.

This sequence belongs to the UPF0161 family.

It localises to the cell inner membrane. Its function is as follows. Could be involved in insertion of integral membrane proteins into the membrane. The chain is Putative membrane protein insertion efficiency factor from Rickettsia bellii (strain RML369-C).